The chain runs to 255 residues: Post-GPI attachment to proteins factor 2 (255 aa).

5 helical membrane-spanning segments follow: residues 23-43 (LALVALSLPLGGFFFCVIWSL), 111-131 (LGILACFLNVVEDLALFCLSF), 143-163 (NAFVVFIACSECYMLVSYLLN), 185-205 (LFLVNVIAFGLAGYCFVRHNS), and 209-229 (AGVYTFFALFEYIVVLTNMGF).

It belongs to the PGAP2 family.

The protein resides in the golgi apparatus membrane. It is found in the endoplasmic reticulum membrane. In terms of biological role, involved in the lipid remodeling steps of GPI-anchor maturation. Required for stable expression of GPI-anchored proteins at the cell surface. This is Post-GPI attachment to proteins factor 2 from Drosophila melanogaster (Fruit fly).